The sequence spans 269 residues: uncharacterized protein (269 aa).

In terms of domain architecture, ACT spans 14-89; that stretch reads FEYEIQVNRP…KLREPRLRDR (76 aa).

This is an uncharacterized protein from Bacillus subtilis (strain 168).